An 80-amino-acid chain; its full sequence is Exodeoxyribonuclease 7 small subunit (80 aa).

This sequence belongs to the XseB family. In terms of assembly, heterooligomer composed of large and small subunits.

It localises to the cytoplasm. The enzyme catalyses Exonucleolytic cleavage in either 5'- to 3'- or 3'- to 5'-direction to yield nucleoside 5'-phosphates.. Its function is as follows. Bidirectionally degrades single-stranded DNA into large acid-insoluble oligonucleotides, which are then degraded further into small acid-soluble oligonucleotides. The chain is Exodeoxyribonuclease 7 small subunit from Maridesulfovibrio salexigens (strain ATCC 14822 / DSM 2638 / NCIMB 8403 / VKM B-1763) (Desulfovibrio salexigens).